Reading from the N-terminus, the 280-residue chain is Phosphatidylglycerol--prolipoprotein diacylglyceryl transferase (280 aa).

4 helical membrane passes run Phe12–Leu32, Leu52–Glu72, Ile86–Leu106, and Phe115–Gly133. Residue Arg134 participates in a 1,2-diacyl-sn-glycero-3-phospho-(1'-sn-glycerol) binding. 3 consecutive transmembrane segments (helical) span residues Pro173–Phe193, Leu203–Ile223, and Ile246–Tyr266.

This sequence belongs to the Lgt family.

The protein localises to the cell inner membrane. The catalysed reaction is L-cysteinyl-[prolipoprotein] + a 1,2-diacyl-sn-glycero-3-phospho-(1'-sn-glycerol) = an S-1,2-diacyl-sn-glyceryl-L-cysteinyl-[prolipoprotein] + sn-glycerol 1-phosphate + H(+). It functions in the pathway protein modification; lipoprotein biosynthesis (diacylglyceryl transfer). Its function is as follows. Catalyzes the transfer of the diacylglyceryl group from phosphatidylglycerol to the sulfhydryl group of the N-terminal cysteine of a prolipoprotein, the first step in the formation of mature lipoproteins. The protein is Phosphatidylglycerol--prolipoprotein diacylglyceryl transferase of Synechococcus sp. (strain CC9902).